A 559-amino-acid polypeptide reads, in one-letter code: 5'-AMP-activated protein kinase catalytic subunit alpha-1 (559 aa).

A Protein kinase domain is found at tyrosine 27–phenylalanine 279. Residue threonine 32 is modified to Phosphothreonine. Residues leucine 33–valine 41 and lysine 56 contribute to the ATP site. The Proton acceptor role is filled by aspartate 150. At threonine 183 the chain carries Phosphothreonine; by LKB1 and CaMKK2. A phosphothreonine mark is found at threonine 269 and threonine 355. The segment at glutamate 302–glutamate 381 is AIS. The residue at position 356 (serine 356) is a Phosphoserine. Serine 360 carries the phosphoserine; by ULK1 modification. Position 368 is a phosphothreonine; by ULK1 (threonine 368). Threonine 382 bears the Phosphothreonine mark. Phosphoserine is present on residues serine 397, serine 467, and serine 486. The segment covering lysine 485–arginine 505 has biased composition (polar residues). Residues lysine 485 to threonine 536 form a disordered region. Threonine 488 and threonine 490 each carry phosphothreonine. Phosphoserine occurs at positions 496, 508, 524, and 527. The segment covering serine 516–leucine 535 has biased composition (low complexity).

It belongs to the protein kinase superfamily. CAMK Ser/Thr protein kinase family. SNF1 subfamily. AMPK is a heterotrimer of an alpha catalytic subunit (PRKAA1 or PRKAA2), a beta (PRKAB1 or PRKAB2) and a gamma non-catalytic subunits (PRKAG1, PRKAG2 or PRKAG3). Interacts with FNIP1 and FNIP2. In terms of assembly, (Microbial infection) Interacts with Dengue type 2 virus non-structural protein 1; this interaction promotes the AMPK/ERK/mTOR signaling pathway to induce autophagy. It depends on Mg(2+) as a cofactor. Ubiquitinated. In terms of processing, phosphorylated at Thr-183 by STK11/LKB1 in complex with STE20-related adapter-alpha (STRADA) pseudo kinase and CAB39. Also phosphorylated at Thr-183 by CAMKK2; triggered by a rise in intracellular calcium ions, without detectable changes in the AMP/ATP ratio. CAMKK1 can also phosphorylate Thr-183, but at a much lower level. Dephosphorylated by protein phosphatase 2A and 2C (PP2A and PP2C). Phosphorylated by ULK1 and ULK2; leading to negatively regulate AMPK activity and suggesting the existence of a regulatory feedback loop between ULK1, ULK2 and AMPK. Dephosphorylated by PPM1A and PPM1B. Post-translationally, glycosylated; O-GlcNAcylated by OGT, promoting the AMP-activated protein kinase (AMPK) activity.

Its subcellular location is the cytoplasm. It is found in the nucleus. It catalyses the reaction L-seryl-[protein] + ATP = O-phospho-L-seryl-[protein] + ADP + H(+). The catalysed reaction is L-threonyl-[protein] + ATP = O-phospho-L-threonyl-[protein] + ADP + H(+). The enzyme catalyses L-seryl-[acetyl-CoA carboxylase] + ATP = O-phospho-L-seryl-[acetyl-CoA carboxylase] + ADP + H(+). It carries out the reaction L-seryl-[3-hydroxy-3-methylglutaryl-coenzyme A reductase] + ATP = O-phospho-L-seryl-[3-hydroxy-3-methylglutaryl-coenzyme A reductase] + ADP + H(+). It catalyses the reaction L-seryl-[tau protein] + ATP = O-phospho-L-seryl-[tau protein] + ADP + H(+). The catalysed reaction is L-threonyl-[tau protein] + ATP = O-phospho-L-threonyl-[tau protein] + ADP + H(+). Its activity is regulated as follows. Activated by phosphorylation on Thr-183. Binding of AMP to non-catalytic gamma subunit (PRKAG1, PRKAG2 or PRKAG3) results in allosteric activation, inducing phosphorylation on Thr-183. AMP-binding to gamma subunit also sustains activity by preventing dephosphorylation of Thr-183. ADP also stimulates Thr-183 phosphorylation, without stimulating already phosphorylated AMPK. ATP promotes dephosphorylation of Thr-183, rendering the enzyme inactive. Under physiological conditions AMPK mainly exists in its inactive form in complex with ATP, which is much more abundant than AMP. AMPK is activated by antihyperglycemic drug metformin, a drug prescribed to patients with type 2 diabetes: in vivo, metformin seems to mainly inhibit liver gluconeogenesis. However, metformin can be used to activate AMPK in muscle and other cells in culture or ex vivo. Selectively inhibited by compound C (6-[4-(2-Piperidin-1-yl-ethoxy)-phenyl)]-3-pyridin-4-yl-pyyrazolo[1,5-a] pyrimidine. Activated by resveratrol, a natural polyphenol present in red wine, and S17834, a synthetic polyphenol. Catalytic subunit of AMP-activated protein kinase (AMPK), an energy sensor protein kinase that plays a key role in regulating cellular energy metabolism. In response to reduction of intracellular ATP levels, AMPK activates energy-producing pathways and inhibits energy-consuming processes: inhibits protein, carbohydrate and lipid biosynthesis, as well as cell growth and proliferation. AMPK acts via direct phosphorylation of metabolic enzymes, and by longer-term effects via phosphorylation of transcription regulators. Regulates lipid synthesis by phosphorylating and inactivating lipid metabolic enzymes such as ACACA, ACACB, GYS1, HMGCR and LIPE; regulates fatty acid and cholesterol synthesis by phosphorylating acetyl-CoA carboxylase (ACACA and ACACB) and hormone-sensitive lipase (LIPE) enzymes, respectively. Promotes lipolysis of lipid droplets by mediating phosphorylation of isoform 1 of CHKA (CHKalpha2). Regulates insulin-signaling and glycolysis by phosphorylating IRS1, PFKFB2 and PFKFB3. AMPK stimulates glucose uptake in muscle by increasing the translocation of the glucose transporter SLC2A4/GLUT4 to the plasma membrane, possibly by mediating phosphorylation of TBC1D4/AS160. Regulates transcription and chromatin structure by phosphorylating transcription regulators involved in energy metabolism such as CRTC2/TORC2, FOXO3, histone H2B, HDAC5, MEF2C, MLXIPL/ChREBP, EP300, HNF4A, p53/TP53, SREBF1, SREBF2 and PPARGC1A. Acts as a key regulator of glucose homeostasis in liver by phosphorylating CRTC2/TORC2, leading to CRTC2/TORC2 sequestration in the cytoplasm. In response to stress, phosphorylates 'Ser-36' of histone H2B (H2BS36ph), leading to promote transcription. Acts as a key regulator of cell growth and proliferation by phosphorylating FNIP1, TSC2, RPTOR, WDR24 and ATG1/ULK1: in response to nutrient limitation, negatively regulates the mTORC1 complex by phosphorylating RPTOR component of the mTORC1 complex and by phosphorylating and activating TSC2. Also phosphorylates and inhibits GATOR2 subunit WDR24 in response to nutrient limitation, leading to suppress glucose-mediated mTORC1 activation. In response to energetic stress, phosphorylates FNIP1, inactivating the non-canonical mTORC1 signaling, thereby promoting nuclear translocation of TFEB and TFE3, and inducing transcription of lysosomal or autophagy genes. In response to nutrient limitation, promotes autophagy by phosphorylating and activating ATG1/ULK1. In that process, it also activates WDR45/WIPI4. Phosphorylates CASP6, thereby preventing its autoprocessing and subsequent activation. In response to nutrient limitation, phosphorylates transcription factor FOXO3 promoting FOXO3 mitochondrial import. Also acts as a regulator of cellular polarity by remodeling the actin cytoskeleton; probably by indirectly activating myosin. AMPK also acts as a regulator of circadian rhythm by mediating phosphorylation of CRY1, leading to destabilize it. May regulate the Wnt signaling pathway by phosphorylating CTNNB1, leading to stabilize it. Also has tau-protein kinase activity: in response to amyloid beta A4 protein (APP) exposure, activated by CAMKK2, leading to phosphorylation of MAPT/TAU; however the relevance of such data remains unclear in vivo. Also phosphorylates CFTR, EEF2K, KLC1, NOS3 and SLC12A1. Regulates hepatic lipogenesis. Activated via SIRT3, represses sterol regulatory element-binding protein (SREBP) transcriptional activities and ATP-consuming lipogenesis to restore cellular energy balance. Upon stress, regulates mitochondrial fragmentation through phosphorylation of MTFR1L. This is 5'-AMP-activated protein kinase catalytic subunit alpha-1 from Homo sapiens (Human).